The sequence spans 770 residues: Glutamate carboxypeptidase 2 homolog (770 aa).

Over 1–25 (MPYVGVGAQTVSTSLTGAPMVKAYI) the chain is Cytoplasmic. The helical; Signal-anchor for type II membrane protein transmembrane segment at 26 to 42 (AIAASLIFVFCIAALGV) threads the bilayer. Residues 43–770 (HHSERKFNKF…CVVNTLRDVI (728 aa)) are Extracellular-facing. N-linked (GlcNAc...) asparagine glycans are attached at residues asparagine 175 and asparagine 337. Residues 282 to 597 (SKKELFKGRT…QYWAELAKTF (316 aa)) are catalytic. Zn(2+) contacts are provided by histidine 387 and aspartate 397. N-linked (GlcNAc...) asparagine glycosylation is present at asparagine 417. Residue glutamate 435 is the Nucleophile of the active site. Positions 436 and 464 each coordinate Zn(2+). Asparagine 469, asparagine 546, and asparagine 551 each carry an N-linked (GlcNAc...) asparagine glycan. Histidine 562 is a Zn(2+) binding site. Residues asparagine 579, asparagine 606, and asparagine 630 are each glycosylated (N-linked (GlcNAc...) asparagine).

This sequence belongs to the peptidase M28 family. M28B subfamily. Requires Zn(2+) as cofactor.

The protein localises to the membrane. It catalyses the reaction Release of an unsubstituted, C-terminal glutamyl residue, typically from Ac-Asp-Glu or folylpoly-gamma-glutamates.. The chain is Glutamate carboxypeptidase 2 homolog from Caenorhabditis elegans.